The primary structure comprises 454 residues: Histidine--tRNA ligase (454 aa).

This sequence belongs to the class-II aminoacyl-tRNA synthetase family. Homodimer.

It localises to the cytoplasm. The enzyme catalyses tRNA(His) + L-histidine + ATP = L-histidyl-tRNA(His) + AMP + diphosphate + H(+). The polypeptide is Histidine--tRNA ligase (Bacteroides fragilis (strain YCH46)).